The chain runs to 237 residues: Golgi to ER traffic protein 1 (237 aa).

Residues 1–4 (MDSG) are Lumenal-facing. The chain crosses the membrane as a helical span at residues 5-24 (GWIVYCCIFFILLGKVLEYT). Residues 25-110 (SSYQDKWFTK…SSKKVFGRVK (86 aa)) lie on the Cytoplasmic side of the membrane. Residues 40–99 (EARKLNSQYHELLSERLRLQEENHSISAQDNYARWTKNNRKLGELDKKLGTIRDKLQETN) adopt a coiled-coil conformation. Residues 111–131 (LIGLTIPFWILKIWQRSHVVY) traverse the membrane as a helical segment. Residues 132–176 (HFPKQDLFPKLVTGVWARGWLYLALGPLQYLRNGSLNIQDYAPHG) lie on the Lumenal side of the membrane. The helical transmembrane segment at 177–193 (VSLGIWIWALQATINTL) threads the bilayer. At 194-237 (EFLVKQVILEKPVSPPPQKSKSATKAETKRPEKLEITDDKVELD) the chain is on the cytoplasmic side. Residues 205–237 (PVSPPPQKSKSATKAETKRPEKLEITDDKVELD) form a disordered region. Residues 217–237 (TKAETKRPEKLEITDDKVELD) show a composition bias toward basic and acidic residues.

The protein belongs to the WRB/GET1 family. As to quaternary structure, component of the Golgi to ER traffic (GET) complex, which is composed of GET1, GET2 and GET3. Within the complex, GET1 and GET2 form a heterotetramer which is stabilized by phosphatidylinositol binding and which binds to the GET3 homodimer.

It is found in the endoplasmic reticulum membrane. The protein resides in the golgi apparatus membrane. Its function is as follows. Required for the post-translational delivery of tail-anchored (TA) proteins to the endoplasmic reticulum. Together with GET2, acts as a membrane receptor for soluble GET3, which recognizes and selectively binds the transmembrane domain of TA proteins in the cytosol. The GET complex cooperates with the HDEL receptor ERD2 to mediate the ATP-dependent retrieval of resident ER proteins that contain a C-terminal H-D-E-L retention signal from the Golgi to the ER. The polypeptide is Golgi to ER traffic protein 1 (Zygosaccharomyces rouxii (strain ATCC 2623 / CBS 732 / NBRC 1130 / NCYC 568 / NRRL Y-229)).